A 179-amino-acid polypeptide reads, in one-letter code: Large ribosomal subunit protein uL5 (179 aa).

It belongs to the universal ribosomal protein uL5 family. As to quaternary structure, part of the 50S ribosomal subunit; part of the 5S rRNA/L5/L18/L25 subcomplex. Contacts the 5S rRNA and the P site tRNA. Forms a bridge to the 30S subunit in the 70S ribosome.

This is one of the proteins that bind and probably mediate the attachment of the 5S RNA into the large ribosomal subunit, where it forms part of the central protuberance. In the 70S ribosome it contacts protein S13 of the 30S subunit (bridge B1b), connecting the 2 subunits; this bridge is implicated in subunit movement. Contacts the P site tRNA; the 5S rRNA and some of its associated proteins might help stabilize positioning of ribosome-bound tRNAs. The polypeptide is Large ribosomal subunit protein uL5 (Geobacillus thermodenitrificans (strain NG80-2)).